Consider the following 180-residue polypeptide: Inner membrane assembly complex subunit 17 (180 aa).

The transit peptide at 1–36 directs the protein to the mitochondrion; sequence MMIRNQLYRKCIIGGGRSILNGWVINGTVPNIGLRY. The Mitochondrial matrix segment spans residues 37–105; that stretch reads LRSGIVTRSN…RKTQDIPIKR (69 aa). Residues 106–128 form a helical membrane-spanning segment; sequence FIRPTWMFLLMSSTFYLLGHYIW. Residues 129–163 are a coiled coil; it reads WKLEYDEVEKELDRQVTALEEELHNLIEEHRVHGE. Topologically, residues 129-180 are mitochondrial intermembrane; sequence WKLEYDEVEKELDRQVTALEEELHNLIEEHRVHGENEAIKNKKHKHWYKFWS.

The protein belongs to the INA17 family. Component of the inner membrane assembly (INA) complex, composed of INA17 and INA22. Interacts with a subset of F(1)F(0)-ATP synthase subunits of the F(1)-domain and the peripheral stalk.

Its subcellular location is the mitochondrion inner membrane. Its function is as follows. Component of the INA complex (INAC) that promotes the biogenesis of mitochondrial F(1)F(0)-ATP synthase. INAC facilitates the assembly of the peripheral stalk and promotes the assembly of the catalytic F(1)-domain with the membrane-embedded F(0)-domain. The chain is Inner membrane assembly complex subunit 17 from Vanderwaltozyma polyspora (strain ATCC 22028 / DSM 70294 / BCRC 21397 / CBS 2163 / NBRC 10782 / NRRL Y-8283 / UCD 57-17) (Kluyveromyces polysporus).